The sequence spans 64 residues: Cytochrome c oxidase subunit 5C-2 (64 aa).

The helical transmembrane segment at 15–34 (SVVKELVIGTVLGLAAGGLW) threads the bilayer.

Belongs to the cytochrome c oxidase subunit 5C family.

The protein resides in the mitochondrion inner membrane. In terms of biological role, this protein is one of the nuclear-coded polypeptide chains of cytochrome c oxidase, the terminal oxidase in mitochondrial electron transport. This is Cytochrome c oxidase subunit 5C-2 (COX5C2) from Helianthus annuus (Common sunflower).